Consider the following 418-residue polypeptide: Acyl-[acyl-carrier-protein] desaturase 4, chloroplastic (418 aa).

Residues 1-70 (MASSGLAVAA…ATAAAPADTA (70 aa)) constitute a chloroplast transit peptide. The Fe cation site is built by E152, E190, H193, E243, E276, and H279.

Belongs to the fatty acid desaturase type 2 family. Homodimer. Requires Fe(2+) as cofactor.

Its subcellular location is the plastid. The protein localises to the chloroplast. The protein operates within lipid metabolism; fatty acid metabolism. In terms of biological role, introduces a cis double bond in the acyl chain of an acyl-[acyl-carrier protein]. In Oryza sativa subsp. japonica (Rice), this protein is Acyl-[acyl-carrier-protein] desaturase 4, chloroplastic.